Consider the following 215-residue polypeptide: Pyrrolidone-carboxylate peptidase (215 aa).

Residues Glu-80, Cys-143, and His-167 contribute to the active site.

It belongs to the peptidase C15 family. In terms of assembly, homotetramer.

The protein resides in the cytoplasm. It carries out the reaction Release of an N-terminal pyroglutamyl group from a polypeptide, the second amino acid generally not being Pro.. Its function is as follows. Removes 5-oxoproline from various penultimate amino acid residues except L-proline. The sequence is that of Pyrrolidone-carboxylate peptidase from Bacillus cereus (strain AH820).